The primary structure comprises 565 residues: Periplasmic trehalase (565 aa).

Residues 1-30 (MKSPTPSRPQKMALIPACIFLCFAALSVQA) form the signal peptide. Residues Arg-152, 159–160 (WD), Asn-196, 205–207 (RSQ), 277–279 (RPE), and Gly-310 each bind substrate. Catalysis depends on proton donor/acceptor residues Asp-312 and Glu-496. Glu-511 provides a ligand contact to substrate. The tract at residues 539-565 (CDNVPATRPLSESTTQPLKQKEAEPTP) is disordered.

This sequence belongs to the glycosyl hydrolase 37 family. As to quaternary structure, monomer.

It is found in the periplasm. The enzyme catalyses alpha,alpha-trehalose + H2O = alpha-D-glucose + beta-D-glucose. Functionally, provides the cells with the ability to utilize trehalose at high osmolarity by splitting it into glucose molecules that can subsequently be taken up by the phosphotransferase-mediated uptake system. This is Periplasmic trehalase from Escherichia coli O7:K1 (strain IAI39 / ExPEC).